Reading from the N-terminus, the 338-residue chain is DNA-directed RNA polymerase subunit alpha (338 aa).

The interval 1-234 is alpha N-terminal domain (alpha-NTD); the sequence is MIHKNWAELI…DQLSIFVNFD (234 aa). The interval 250-338 is alpha C-terminal domain (alpha-CTD); sequence FNPLLLKKVD…DLAKKFEDAF (89 aa).

Belongs to the RNA polymerase alpha chain family. In terms of assembly, homodimer. The RNAP catalytic core consists of 2 alpha, 1 beta, 1 beta' and 1 omega subunit. When a sigma factor is associated with the core the holoenzyme is formed, which can initiate transcription.

It catalyses the reaction RNA(n) + a ribonucleoside 5'-triphosphate = RNA(n+1) + diphosphate. Its function is as follows. DNA-dependent RNA polymerase catalyzes the transcription of DNA into RNA using the four ribonucleoside triphosphates as substrates. The polypeptide is DNA-directed RNA polymerase subunit alpha (Ruegeria pomeroyi (strain ATCC 700808 / DSM 15171 / DSS-3) (Silicibacter pomeroyi)).